Here is a 122-residue protein sequence, read N- to C-terminus: Large ribosomal subunit protein uL14 (122 aa).

It belongs to the universal ribosomal protein uL14 family. In terms of assembly, part of the 50S ribosomal subunit. Forms a cluster with proteins L3 and L19. In the 70S ribosome, L14 and L19 interact and together make contacts with the 16S rRNA in bridges B5 and B8.

In terms of biological role, binds to 23S rRNA. Forms part of two intersubunit bridges in the 70S ribosome. The chain is Large ribosomal subunit protein uL14 from Renibacterium salmoninarum (strain ATCC 33209 / DSM 20767 / JCM 11484 / NBRC 15589 / NCIMB 2235).